The sequence spans 409 residues: Nucleoprotein (409 aa).

4 disordered regions span residues 1-32 (MASGKAAGKSDAPTPIIKLGGPKPPKIGSSGN), 47-84 (PQPKFEGSGVPDNNNIKPSQQHGYWRRQARYKPGKSGR), 121-145 (ADTKSRSNQGTRDPDKFDQYPLRFS), and 164-194 (RSGRSTAASSAASSRAPSREGSRGRRSGAED). Residues 29–160 (SSGNASWFQA…GNFRWDFIPL (132 aa)) are RNA-binding. The CoV N NTD domain occupies 31–156 (GNASWFQAIK…GGPDGNFRWD (126 aa)). Over residues 57 to 68 (PDNNNIKPSQQH) the composition is skewed to polar residues. The segment covering 70–84 (YWRRQARYKPGKSGR) has biased composition (basic residues). The segment covering 164–179 (RSGRSTAASSAASSRA) has biased composition (low complexity). A compositionally biased stretch (basic and acidic residues) spans 180–192 (PSREGSRGRRSGA). S190 bears the Phosphoserine; by host mark. The 117-residue stretch at 215-331 (TKAKADEMAH…QCVDGVGTRP (117 aa)) folds into the CoV N CTD domain. The segment at 226 to 333 (RYCKRTIPPG…VDGVGTRPKD (108 aa)) is dimerization. C320 and C323 are disulfide-bonded. Residues 326–409 (GVGTRPKDDE…GDSALGENEL (84 aa)) form a disordered region. A compositionally biased stretch (basic residues) spans 358–367 (QRPKKEKKPK). Positions 368–384 (KQDDEVDKALTSDEERN) are enriched in basic and acidic residues. Position 378 is a phosphothreonine; by host (T378). S379 carries the phosphoserine; by host modification.

It belongs to the gammacoronavirus nucleocapsid protein family. As to quaternary structure, homooligomer. Both monomeric and oligomeric forms interact with RNA. Interacts with protein M. Interacts with NSP3; this interaction serves to tether the genome to the newly translated replicase-transcriptase complex at a very early stage of infection. In terms of processing, ADP-ribosylated. The ADP-ribosylation is retained in the virion during infection. Post-translationally, phosphorylated on serine and threonine residues.

The protein localises to the virion. It localises to the host endoplasmic reticulum-Golgi intermediate compartment. The protein resides in the host Golgi apparatus. Functionally, packages the positive strand viral genome RNA into a helical ribonucleocapsid (RNP) and plays a fundamental role during virion assembly through its interactions with the viral genome and membrane protein M. Plays an important role in enhancing the efficiency of subgenomic viral RNA transcription as well as viral replication. The sequence is that of Nucleoprotein from Gallus gallus (Chicken).